The chain runs to 401 residues: L-rhamnonate dehydratase (401 aa).

Residues histidine 29 and arginine 55 each contribute to the substrate site. Residues aspartate 222, glutamate 248, and glutamate 276 each coordinate Mg(2+). Histidine 325 (proton acceptor) is an active-site residue. Glutamate 345 is a substrate binding site.

The protein belongs to the mandelate racemase/muconate lactonizing enzyme family. RhamD subfamily. As to quaternary structure, homooctamer; tetramer of dimers. Mg(2+) serves as cofactor.

It catalyses the reaction L-rhamnonate = 2-dehydro-3-deoxy-L-rhamnonate + H2O. In terms of biological role, catalyzes the dehydration of L-rhamnonate to 2-keto-3-deoxy-L-rhamnonate (KDR). The chain is L-rhamnonate dehydratase from Salmonella schwarzengrund (strain CVM19633).